The following is a 197-amino-acid chain: Cell division protein SepF (197 aa).

Positions 15–91 (DEEEVESPEE…PPSKSNGKNV (77 aa)) are disordered. The segment covering 22–31 (PEERQRRVVQ) has biased composition (basic and acidic residues). A compositionally biased stretch (low complexity) spans 37-47 (TNNVQQNQPQQ). Composition is skewed to polar residues over residues 48–58 (SERSYSNQSKL) and 78–91 (RMNQPPSKSNGKNV).

Belongs to the SepF family. Homodimer. Interacts with FtsZ.

Its subcellular location is the cytoplasm. In terms of biological role, cell division protein that is part of the divisome complex and is recruited early to the Z-ring. Probably stimulates Z-ring formation, perhaps through the cross-linking of FtsZ protofilaments. Its function overlaps with FtsA. The sequence is that of Cell division protein SepF from Staphylococcus haemolyticus (strain JCSC1435).